Consider the following 228-residue polypeptide: Prolactin (228 aa).

The N-terminal stretch at 1 to 29 (MCPKGSSVKGSLLLLLLMSSRFLFKAVES) is a signal peptide. Residues cysteine 33 and cysteine 40 are joined by a disulfide bond. Residues serine 55, serine 63, and serine 119 each carry the phosphoserine modification. 2 cysteine pairs are disulfide-bonded: cysteine 87–cysteine 203 and cysteine 220–cysteine 228.

This sequence belongs to the somatotropin/prolactin family. Interacts with PRLR.

It localises to the secreted. Functionally, prolactin acts primarily on the mammary gland by promoting lactation. This chain is Prolactin (PRL), found in Monodelphis domestica (Gray short-tailed opossum).